The primary structure comprises 356 residues: Protein pelota homolog (356 aa).

The protein belongs to the eukaryotic release factor 1 family. Pelota subfamily. Monomer. Requires a divalent metal cation as cofactor.

The protein resides in the cytoplasm. Functionally, may function in recognizing stalled ribosomes, interact with stem-loop structures in stalled mRNA molecules, and effect endonucleolytic cleavage of the mRNA. May play a role in the release non-functional ribosomes and degradation of damaged mRNAs. Has endoribonuclease activity. In Pyrococcus furiosus (strain ATCC 43587 / DSM 3638 / JCM 8422 / Vc1), this protein is Protein pelota homolog.